The primary structure comprises 423 residues: Chitinase 1 (423 aa).

An N-terminal signal peptide occupies residues 1–22 (MLSFVKKSIALVAALQAVTALA). Residues 23-34 (TPISSEAGVEKR) constitute a propeptide that is removed on maturation. Residues 38–401 (FANAVYFTNW…STSHQGLGSQ (364 aa)) form the GH18 domain. Chitin contacts are provided by residues 102–103 (GT) and 129–132 (GGWT). The Proton donor role is filled by E171. Residues Y172, 237–240 (MAYD), and W378 contribute to the chitin site.

The protein belongs to the glycosyl hydrolase 18 family. Chitinase class V subfamily.

The protein resides in the secreted. It carries out the reaction Random endo-hydrolysis of N-acetyl-beta-D-glucosaminide (1-&gt;4)-beta-linkages in chitin and chitodextrins.. This Aphanocladium album (Wheat rust fungus) protein is Chitinase 1 (CHI1).